The chain runs to 225 residues: Imidazole glycerol phosphate synthase subunit HisH (225 aa).

One can recognise a Glutamine amidotransferase type-1 domain in the interval 3-225 (TIAIVDYGMG…LYRNFVDWQP (223 aa)). Residue Cys82 is the Nucleophile of the active site. Residues His205 and Glu207 contribute to the active site.

As to quaternary structure, heterodimer of HisH and HisF.

The protein localises to the cytoplasm. It carries out the reaction 5-[(5-phospho-1-deoxy-D-ribulos-1-ylimino)methylamino]-1-(5-phospho-beta-D-ribosyl)imidazole-4-carboxamide + L-glutamine = D-erythro-1-(imidazol-4-yl)glycerol 3-phosphate + 5-amino-1-(5-phospho-beta-D-ribosyl)imidazole-4-carboxamide + L-glutamate + H(+). The catalysed reaction is L-glutamine + H2O = L-glutamate + NH4(+). Its pathway is amino-acid biosynthesis; L-histidine biosynthesis; L-histidine from 5-phospho-alpha-D-ribose 1-diphosphate: step 5/9. Its function is as follows. IGPS catalyzes the conversion of PRFAR and glutamine to IGP, AICAR and glutamate. The HisH subunit catalyzes the hydrolysis of glutamine to glutamate and ammonia as part of the synthesis of IGP and AICAR. The resulting ammonia molecule is channeled to the active site of HisF. The polypeptide is Imidazole glycerol phosphate synthase subunit HisH (Bordetella bronchiseptica (strain ATCC BAA-588 / NCTC 13252 / RB50) (Alcaligenes bronchisepticus)).